The sequence spans 160 residues: Type IV major fimbrial protein FimA (160 aa).

Positions 1–7 are cleaved as a propeptide — leader sequence; the sequence is MKSLQKG. At phenylalanine 8 the chain carries N-methylphenylalanine. The chain crosses the membrane as a helical span at residues 8–28; it reads FTLIELMIVVAIIGILAAFAI. A disulfide bridge connects residues cysteine 63 and cysteine 105.

Belongs to the N-Me-Phe pilin family. In terms of assembly, the pili are polar flexible filaments of about 5.4 nanometers diameter and 2.5 micrometers average length; they consist of only a single polypeptide chain arranged in a helical configuration of five subunits per turn in the assembled pilus.

It is found in the fimbrium. Its subcellular location is the membrane. Major component of the type IV fimbriae that plays an essential role in twitching motility, natural transformation, and protease secretion. The polypeptide is Type IV major fimbrial protein FimA (fimA) (Dichelobacter nodosus (Bacteroides nodosus)).